The primary structure comprises 152 residues: UPF0178 protein YE1167 (152 aa).

It belongs to the UPF0178 family.

In Yersinia enterocolitica serotype O:8 / biotype 1B (strain NCTC 13174 / 8081), this protein is UPF0178 protein YE1167.